Reading from the N-terminus, the 578-residue chain is A-type ATP synthase subunit A (578 aa).

Glycine 228–threonine 235 contributes to the ATP binding site.

The protein belongs to the ATPase alpha/beta chains family. As to quaternary structure, has multiple subunits with at least A(3), B(3), C, D, E, F, G, I and proteolipid K(x).

The protein localises to the cell membrane. The catalysed reaction is ATP + H2O + 4 H(+)(in) = ADP + phosphate + 5 H(+)(out). Its activity is regulated as follows. ATP hydrolysis stimulated by sulfite, ethanol, glycerol, magnesium and zinc ions, inhibited by diethylstilbestrol (DES) and less well by N,N-dicyclohexylcarbodiimide (DCCD). Functionally, component of the A-type ATP synthase that produces ATP from ADP in the presence of a proton gradient across the membrane. The A chain is the catalytic subunit. This chain is A-type ATP synthase subunit A, found in Methanosarcina mazei (strain ATCC BAA-159 / DSM 3647 / Goe1 / Go1 / JCM 11833 / OCM 88) (Methanosarcina frisia).